The following is a 333-amino-acid chain: 6-phosphogluconolactonase (333 aa).

Belongs to the cycloisomerase 2 family.

The enzyme catalyses 6-phospho-D-glucono-1,5-lactone + H2O = 6-phospho-D-gluconate + H(+). Its pathway is carbohydrate degradation; pentose phosphate pathway; D-ribulose 5-phosphate from D-glucose 6-phosphate (oxidative stage): step 2/3. In terms of biological role, catalyzes the hydrolysis of 6-phosphogluconolactone to 6-phosphogluconate. The chain is 6-phosphogluconolactonase from Cronobacter sakazakii (strain ATCC BAA-894) (Enterobacter sakazakii).